Reading from the N-terminus, the 184-residue chain is Two-component response regulator ARR5 (184 aa).

Positions 26-154 constitute a Response regulatory domain; that stretch reads HVLAVDDSMV…DVKRLRDSLM (129 aa). Residue D87 is modified to 4-aspartylphosphate.

Belongs to the ARR family. Type-A subfamily. Two-component system major event consists of a His-to-Asp phosphorelay between a sensor histidine kinase (HK) and a response regulator (RR). In plants, the His-to-Asp phosphorelay involves an additional intermediate named Histidine-containing phosphotransfer protein (HPt). This multistep phosphorelay consists of a His-Asp-His-Asp sequential transfer of a phosphate group between first a His and an Asp of the HK protein, followed by the transfer to a conserved His of the HPt protein and finally the transfer to an Asp in the receiver domain of the RR protein. As to expression, predominantly expressed in roots and shoot apical meristems.

It is found in the nucleus. In terms of biological role, functions as a response regulator involved in His-to-Asp phosphorelay signal transduction system. Phosphorylation of the Asp residue in the receiver domain activates the ability of the protein to promote the transcription of target genes. Type-A response regulators seem to act as negative regulators of the cytokinin signaling. This Arabidopsis thaliana (Mouse-ear cress) protein is Two-component response regulator ARR5 (ARR5).